Here is a 129-residue protein sequence, read N- to C-terminus: uncharacterized protein (129 aa).

A helical transmembrane segment spans residues 103-125; sequence AISSAFQYGLSTSNFFFIFLYIF.

The protein localises to the membrane. This is an uncharacterized protein from Acanthamoeba polyphaga (Amoeba).